Consider the following 112-residue polypeptide: Putative galactitol utilization operon repressor (112 aa).

An HTH deoR-type domain is found at 5–60; that stretch reads SFERRNKIIQLVNEQGTVLVQDLAGVFAASEATIRADLRFLEQKGVVTRFHGGAAK. The segment at residues 22–41 is a DNA-binding region (H-T-H motif); sequence VLVQDLAGVFAASEATIRAD.

Functionally, repressor of the gat operon for galacticol transport and metabolism. In K12 strains the operon is constitutively expressed because this gene is inactive. The protein is Putative galactitol utilization operon repressor (gatR) of Escherichia coli (strain K12).